The sequence spans 339 residues: Phenylalanine--tRNA ligase alpha subunit (339 aa).

A compositionally biased stretch (basic and acidic residues) spans 1 to 14 (MEAKLKQLEEKAKQ). The segment at 1–20 (MEAKLKQLEEKAKQDIQAST) is disordered. Glu-254 is a Mg(2+) binding site.

It belongs to the class-II aminoacyl-tRNA synthetase family. Phe-tRNA synthetase alpha subunit type 1 subfamily. Tetramer of two alpha and two beta subunits. It depends on Mg(2+) as a cofactor.

It is found in the cytoplasm. The catalysed reaction is tRNA(Phe) + L-phenylalanine + ATP = L-phenylalanyl-tRNA(Phe) + AMP + diphosphate + H(+). The polypeptide is Phenylalanine--tRNA ligase alpha subunit (Alkaliphilus metalliredigens (strain QYMF)).